The sequence spans 287 residues: Heavy metal-associated isoprenylated plant protein 4 (287 aa).

2 HMA domains span residues 14-80 and 112-176; these read IITA…VELI and IRTT…KHAE. A metal cation is bound by residues Cys-25, Cys-28, Cys-123, and Cys-126. A coiled-coil region spans residues 179-235; it reads SSKTEEEKKKEEEDKKKKEEEDKKKKEDEKKKEEEKKKEEENKKKEGEKKKEEVKVE. The segment at 181 to 232 is disordered; sequence KTEEEKKKEEEDKKKKEEEDKKKKEDEKKKEEEKKKEEENKKKEGEKKKEEV. Cys-284 bears the Cysteine methyl ester mark. Cys-284 carries the S-farnesyl cysteine lipid modification. A propeptide spans 285-287 (removed in mature form); that stretch reads RIV.

The protein belongs to the HIPP family.

In terms of biological role, heavy-metal-binding protein. The protein is Heavy metal-associated isoprenylated plant protein 4 of Arabidopsis thaliana (Mouse-ear cress).